A 340-amino-acid polypeptide reads, in one-letter code: Latency-related protein 1 (340 aa).

2 disordered regions span residues 13 to 96 (AALW…PNRQ) and 254 to 340 (RLPG…PPRP). 2 repeat units span residues 27–43 (PTPT…PRTP) and 59–75 (PTPT…PRTP). The 2 X 17 AA repeats stretch occupies residues 27-75 (PTPTHPHSHAPPLPRTPTPSHPHSRAPPLPRAPTPTHPHSHAPPLPRTP). A compositionally biased stretch (pro residues) spans 35–73 (HAPPLPRTPTPSHPHSRAPPLPRAPTPTHPHSHAPPLPR). Over residues 287-307 (ARGGGSGGGRGPGGGRGGPRG) the composition is skewed to gly residues. Residues 308–326 (SRGRGGRGRGGRGGGRRGR) show a composition bias toward basic residues.

The chain is Latency-related protein 1 from Human herpesvirus 1 (strain F) (HHV-1).